We begin with the raw amino-acid sequence, 414 residues long: WD repeat-containing protein jip5 (414 aa).

5 WD repeats span residues 9-48, 73-112, 118-159, 222-263, and 319-356; these read PLSA…SDTD, RHKG…VENK, AKDG…SPVS, VSSV…DQDE, and DETE…DGMD. The tract at residues 39 to 65 is disordered; the sequence is RLPSEESDTDGDGAESTSSSRNGKGHI. The tract at residues 352-414 is disordered; it reads SDGMDGDMAG…QDIMGFADID (63 aa). A compositionally biased stretch (acidic residues) spans 369–383; that stretch reads DSDDSDDGDDSDDSD.

This sequence belongs to the WD repeat WDR55 family.

The protein localises to the nucleus. Its subcellular location is the nucleolus. This chain is WD repeat-containing protein jip5 (jip5), found in Neosartorya fischeri (strain ATCC 1020 / DSM 3700 / CBS 544.65 / FGSC A1164 / JCM 1740 / NRRL 181 / WB 181) (Aspergillus fischerianus).